A 369-amino-acid chain; its full sequence is DNA replication and repair protein RecF (369 aa).

An ATP-binding site is contributed by 30-37; it reads GENGQGKT.

This sequence belongs to the RecF family.

It localises to the cytoplasm. Its function is as follows. The RecF protein is involved in DNA metabolism; it is required for DNA replication and normal SOS inducibility. RecF binds preferentially to single-stranded, linear DNA. It also seems to bind ATP. This is DNA replication and repair protein RecF from Anaeromyxobacter sp. (strain Fw109-5).